We begin with the raw amino-acid sequence, 490 residues long: GTPase Der (490 aa).

EngA-type G domains are found at residues 3 to 166 (PVVA…MEDL) and 203 to 376 (IKLA…DSST). GTP is bound by residues 9-16 (GRPNVGKS), 56-60 (DTGGI), 118-121 (NKTD), 209-216 (GRPNVGKS), 256-260 (DTAGV), and 321-324 (NKWD). The KH-like domain maps to 377–461 (RRVGTSMLTR…PIRIQFKEGE (85 aa)).

This sequence belongs to the TRAFAC class TrmE-Era-EngA-EngB-Septin-like GTPase superfamily. EngA (Der) GTPase family. In terms of assembly, associates with the 50S ribosomal subunit.

In terms of biological role, GTPase that plays an essential role in the late steps of ribosome biogenesis. The polypeptide is GTPase Der (Escherichia fergusonii (strain ATCC 35469 / DSM 13698 / CCUG 18766 / IAM 14443 / JCM 21226 / LMG 7866 / NBRC 102419 / NCTC 12128 / CDC 0568-73)).